Here is a 199-residue protein sequence, read N- to C-terminus: ATP-dependent Clp protease proteolytic subunit 2 (199 aa).

Ser-95 acts as the Nucleophile in catalysis. The active site involves His-120.

The protein belongs to the peptidase S14 family. Fourteen ClpP subunits assemble into 2 heptameric rings which stack back to back to give a disk-like structure with a central cavity, resembling the structure of eukaryotic proteasomes.

It is found in the cytoplasm. It carries out the reaction Hydrolysis of proteins to small peptides in the presence of ATP and magnesium. alpha-casein is the usual test substrate. In the absence of ATP, only oligopeptides shorter than five residues are hydrolyzed (such as succinyl-Leu-Tyr-|-NHMec, and Leu-Tyr-Leu-|-Tyr-Trp, in which cleavage of the -Tyr-|-Leu- and -Tyr-|-Trp bonds also occurs).. In terms of biological role, cleaves peptides in various proteins in a process that requires ATP hydrolysis. Has a chymotrypsin-like activity. Plays a major role in the degradation of misfolded proteins. The protein is ATP-dependent Clp protease proteolytic subunit 2 of Mycolicibacterium paratuberculosis (strain ATCC BAA-968 / K-10) (Mycobacterium paratuberculosis).